Here is a 449-residue protein sequence, read N- to C-terminus: MKERKYFGTDGVRGLVGEHPINPEFAMKLGWAAGRVLSENGTKKVMIGKDTRISGYMLETALQAGLIAAGIDVVLLGPMPTPAIAYLAQTFRAEAGIVISASHNPYYDNGIKFFNCRGLKLDDKVELEIEAMLDEPMTCVESDKLGKASRLTSADGRYIEFCKSQFPQSLSLEGLKIVLDCANGATYHIAPSVMRELGANIITHACEPNGVNINHECGATHVDTLKRKVLEHNADVGIAYDGDGDRVMMVDHNGRVFDGDDLVYIIACQAAQDDNLGGGVVGTVMSNMGLENALKAKGIEFARSKVGDRYVMELLQQKGWTIGGESSGHVLNLDLISTGDGIISSLQVLAAMVAQNKTLQDLGTGFTKYPMKMINVRYTPGTDPTKAPAVLAAVAEVEQTLGEKGRVLLRKSGTEPVVRVMVEAEQEKLVIDSAEKIAAVVESMSKQTD.

Serine 102 acts as the Phosphoserine intermediate in catalysis. Residues serine 102, aspartate 241, aspartate 243, and aspartate 245 each contribute to the Mg(2+) site. Position 102 is a phosphoserine (serine 102).

The protein belongs to the phosphohexose mutase family. Requires Mg(2+) as cofactor. Activated by phosphorylation.

The enzyme catalyses alpha-D-glucosamine 1-phosphate = D-glucosamine 6-phosphate. Its function is as follows. Catalyzes the conversion of glucosamine-6-phosphate to glucosamine-1-phosphate. This chain is Phosphoglucosamine mutase, found in Pseudoalteromonas translucida (strain TAC 125).